A 353-amino-acid polypeptide reads, in one-letter code: Glycerol-3-phosphate dehydrogenase [NAD(+)], cytoplasmic (353 aa).

Blocked amino end (Ala) is present on Ala2. Residues 11–16 (GSGNWG), Phe98, Lys121, and Ala155 contribute to the NAD(+) site. A substrate-binding site is contributed by Lys121. The Proton acceptor role is filled by Lys206. NAD(+) contacts are provided by Arg270 and Gln299. Position 270-271 (270-271 (RN)) interacts with substrate.

It belongs to the NAD-dependent glycerol-3-phosphate dehydrogenase family. Homodimer.

It localises to the cytoplasm. It catalyses the reaction sn-glycerol 3-phosphate + NAD(+) = dihydroxyacetone phosphate + NADH + H(+). The protein operates within phospholipid metabolism; alpha-glycerophosphate cycle. This is Glycerol-3-phosphate dehydrogenase [NAD(+)], cytoplasmic from Drosophila virilis (Fruit fly).